We begin with the raw amino-acid sequence, 2890 residues long: Bifunctional DNA-directed RNA polymerase subunit beta-beta' (2890 aa).

Positions methionine 1 to aspartate 1377 are DNA-directed RNA polymerase subunit beta. The interval proline 1384 to phenylalanine 2890 is DNA-directed RNA polymerase subunit beta'. The Zn(2+) site is built by cysteine 1449, cysteine 1451, cysteine 1465, and cysteine 1468. Mg(2+) contacts are provided by aspartate 1849, aspartate 1851, and aspartate 1853. Zn(2+) is bound by residues cysteine 2179, cysteine 2253, cysteine 2260, and cysteine 2263.

The protein in the N-terminal section; belongs to the RNA polymerase beta chain family. In the C-terminal section; belongs to the RNA polymerase beta' chain family. The RNAP catalytic core consists of 2 alpha, 1 beta/beta' and 1 omega subunit. When a sigma factor is associated with the core the holoenzyme is formed, which can initiate transcription. Requires Mg(2+) as cofactor. Zn(2+) serves as cofactor.

The catalysed reaction is RNA(n) + a ribonucleoside 5'-triphosphate = RNA(n+1) + diphosphate. Its function is as follows. DNA-dependent RNA polymerase catalyzes the transcription of DNA into RNA using the four ribonucleoside triphosphates as substrates. The protein is Bifunctional DNA-directed RNA polymerase subunit beta-beta' (rpoBC) of Helicobacter pylori (strain J99 / ATCC 700824) (Campylobacter pylori J99).